A 239-amino-acid polypeptide reads, in one-letter code: Cytochrome b6-f complex iron-sulfur subunit 1, cyanelle (239 aa).

The transit peptide at 1–60 (MAFTTTAVVAPRGAKITGQSSTCAIQNGKTVAVGTSKQVGSFKPVFAAAKPAKETTFSVS) directs the protein to the cyanelle. A helical membrane pass occupies residues 81–101 (LLGAIAGPVAGAGGPFVSFLV). A Rieske domain is found at 125-221 (VSSWLETHKP…VSVLEDGVVA (97 aa)). Positions 167, 169, 185, and 188 each coordinate [2Fe-2S] cluster. A disulfide bond links Cys172 and Cys187.

Belongs to the Rieske iron-sulfur protein family. As to quaternary structure, the 4 large subunits of the cytochrome b6-f complex are cytochrome b6, subunit IV (17 kDa polypeptide, petD), cytochrome f and the Rieske protein, while the 4 small subunits are petG, petL, petM and petN. The complex functions as a dimer. The cofactor is [2Fe-2S] cluster.

It is found in the plastid. Its subcellular location is the cyanelle thylakoid membrane. It carries out the reaction 2 oxidized [plastocyanin] + a plastoquinol + 2 H(+)(in) = 2 reduced [plastocyanin] + a plastoquinone + 4 H(+)(out). Component of the cytochrome b6-f complex, which mediates electron transfer between photosystem II (PSII) and photosystem I (PSI), cyclic electron flow around PSI, and state transitions. The protein is Cytochrome b6-f complex iron-sulfur subunit 1, cyanelle (petC-1) of Cyanophora paradoxa.